The following is a 300-amino-acid chain: MATKAAFAKMNGLGNQIIVADMRGRADRITPEAAIRLAGDSETAFDQIMAIHDPRTAGTDNYIAIINCDGTEAQACGNGTRCVVQALAAETGRQAFTFETRAGILTATEHEDGLISVDMGKPRFDWQDIPLAEEFRDTRMIELQVGPIDAPVLHSPSVASMGNPHAIFWVDRDVWSYELEKFGPLLEHHPIFPERANISIAHVTSPETIDLRTWERGAGLTRACGSAACAAAVSAVRTRRTGRTVTVNVPGGPLRIEWRDDDHVMMTGPAEWEFSGTFDPATGEWSRDAQNDKPTDRGAA.

Positions 15, 47, and 67 each coordinate substrate. Cys-76 serves as the catalytic Proton donor. Residues 77–78, Asn-163, Asn-197, and 215–216 each bind substrate; these read GN and ER. Cys-224 serves as the catalytic Proton acceptor. A substrate-binding site is contributed by 225–226; it reads GS. A disordered region spans residues 275–300; that stretch reads SGTFDPATGEWSRDAQNDKPTDRGAA. Residues 285–300 are compositionally biased toward basic and acidic residues; it reads WSRDAQNDKPTDRGAA.

The protein belongs to the diaminopimelate epimerase family. Homodimer.

Its subcellular location is the cytoplasm. The enzyme catalyses (2S,6S)-2,6-diaminopimelate = meso-2,6-diaminopimelate. The protein operates within amino-acid biosynthesis; L-lysine biosynthesis via DAP pathway; DL-2,6-diaminopimelate from LL-2,6-diaminopimelate: step 1/1. Catalyzes the stereoinversion of LL-2,6-diaminopimelate (L,L-DAP) to meso-diaminopimelate (meso-DAP), a precursor of L-lysine and an essential component of the bacterial peptidoglycan. The protein is Diaminopimelate epimerase of Brucella anthropi (strain ATCC 49188 / DSM 6882 / CCUG 24695 / JCM 21032 / LMG 3331 / NBRC 15819 / NCTC 12168 / Alc 37) (Ochrobactrum anthropi).